Reading from the N-terminus, the 209-residue chain is Orotate phosphoribosyltransferase (209 aa).

Residues R96, K100, H102, and 122–130 (EDLISTGGS) each bind 5-phospho-alpha-D-ribose 1-diphosphate. S126 provides a ligand contact to orotate.

The protein belongs to the purine/pyrimidine phosphoribosyltransferase family. PyrE subfamily. In terms of assembly, homodimer. Mg(2+) serves as cofactor.

It catalyses the reaction orotidine 5'-phosphate + diphosphate = orotate + 5-phospho-alpha-D-ribose 1-diphosphate. It participates in pyrimidine metabolism; UMP biosynthesis via de novo pathway; UMP from orotate: step 1/2. Catalyzes the transfer of a ribosyl phosphate group from 5-phosphoribose 1-diphosphate to orotate, leading to the formation of orotidine monophosphate (OMP). This Lactococcus lactis subsp. lactis (strain IL1403) (Streptococcus lactis) protein is Orotate phosphoribosyltransferase.